The sequence spans 285 residues: Tryptophan synthase alpha chain (285 aa).

Residues glutamate 53 and aspartate 64 each act as proton acceptor in the active site.

This sequence belongs to the TrpA family. In terms of assembly, tetramer of two alpha and two beta chains.

It carries out the reaction (1S,2R)-1-C-(indol-3-yl)glycerol 3-phosphate + L-serine = D-glyceraldehyde 3-phosphate + L-tryptophan + H2O. The protein operates within amino-acid biosynthesis; L-tryptophan biosynthesis; L-tryptophan from chorismate: step 5/5. In terms of biological role, the alpha subunit is responsible for the aldol cleavage of indoleglycerol phosphate to indole and glyceraldehyde 3-phosphate. This is Tryptophan synthase alpha chain from Bordetella parapertussis (strain 12822 / ATCC BAA-587 / NCTC 13253).